The primary structure comprises 297 residues: MNDLIEDFLHFLIVERGLSANTIKAYERDLHYFVSYMDVTKELTDPNTLERSDIVGFMAFARQEGKSPRSVARYIASLRSFFHYLMHDGKMSHDPMIQIETPKQAQGLPKVLNLDDVEKLLSSSDTSTPLGLRDQAMMEILYATGLRVTELVSLKMDDLHLHMGFIQTIGKGDKERIIPLGKTATTVLEKYLEEARPKLRRPKYRNDFVFLNHHGQGLTRQGFWKILKGIAKESGIEKPITPHTLRHSFATHLLENGADLRSVQELLGHADISTTQIYTHVTKLRLKDVYKQFHPRA.

In terms of domain architecture, Core-binding (CB) spans 1–86 (MNDLIEDFLH…SLRSFFHYLM (86 aa)). The 185-residue stretch at 107–291 (GLPKVLNLDD…TKLRLKDVYK (185 aa)) folds into the Tyr recombinase domain. Residues arginine 147, lysine 171, histidine 243, arginine 246, and histidine 269 contribute to the active site. The active-site O-(3'-phospho-DNA)-tyrosine intermediate is the tyrosine 278.

This sequence belongs to the 'phage' integrase family. XerD subfamily. As to quaternary structure, forms a cyclic heterotetrameric complex composed of two molecules of XerC and two molecules of XerD.

Its subcellular location is the cytoplasm. Functionally, site-specific tyrosine recombinase, which acts by catalyzing the cutting and rejoining of the recombining DNA molecules. The XerC-XerD complex is essential to convert dimers of the bacterial chromosome into monomers to permit their segregation at cell division. It also contributes to the segregational stability of plasmids. This chain is Tyrosine recombinase XerD, found in Listeria monocytogenes serovar 1/2a (strain ATCC BAA-679 / EGD-e).